The primary structure comprises 420 residues: Ribulose bisphosphate carboxylase large chain (420 aa).

Substrate is bound by residues N103 and T153. K155 serves as the catalytic Proton acceptor. K157 provides a ligand contact to substrate. Mg(2+) contacts are provided by K181, D183, and E184. Residue K181 is modified to N6-carboxylysine. The Proton acceptor role is filled by H274. Positions 275, 307, and 359 each coordinate substrate.

This sequence belongs to the RuBisCO large chain family. Type I subfamily. Heterohexadecamer of 8 large chains and 8 small chains; disulfide-linked. The disulfide link is formed within the large subunit homodimers. The cofactor is Mg(2+). The disulfide bond which can form in the large chain dimeric partners within the hexadecamer appears to be associated with oxidative stress and protein turnover.

Its subcellular location is the plastid. The protein localises to the chloroplast. The catalysed reaction is 2 (2R)-3-phosphoglycerate + 2 H(+) = D-ribulose 1,5-bisphosphate + CO2 + H2O. It catalyses the reaction D-ribulose 1,5-bisphosphate + O2 = 2-phosphoglycolate + (2R)-3-phosphoglycerate + 2 H(+). In terms of biological role, ruBisCO catalyzes two reactions: the carboxylation of D-ribulose 1,5-bisphosphate, the primary event in carbon dioxide fixation, as well as the oxidative fragmentation of the pentose substrate in the photorespiration process. Both reactions occur simultaneously and in competition at the same active site. This is Ribulose bisphosphate carboxylase large chain from Anemia mexicana (Mexican fern).